Reading from the N-terminus, the 194-residue chain is Large ribosomal subunit protein uL6m (194 aa).

Belongs to the universal ribosomal protein uL6 family.

Its subcellular location is the mitochondrion. The sequence is that of Large ribosomal subunit protein uL6m (RPL6) from Prototheca wickerhamii.